A 195-amino-acid chain; its full sequence is Transcriptional regulator LdrP (195 aa).

Residues Gly-110–Ala-182 form the HTH crp-type domain. A DNA-binding region (H-T-H motif) is located at residues His-142–Ala-161.

Homodimer.

Functionally, activates transcription. Positively regulates PcrtB promoter upstream of the crtB operon in a cAMP-independent manner. Regulated genes include genes encoding DNA photolyase, phytoene synthase and cytochrome P450 monooxygenase, which are involved in carotenoid biosynthesis. Positively regulates the light-inducible gene cluster in the megaplasmid in a cAMP-independent manner. In Thermus thermophilus (strain ATCC 27634 / DSM 579 / HB8), this protein is Transcriptional regulator LdrP.